The primary structure comprises 276 residues: NAD kinase (276 aa).

Residue Asp61 is the Proton acceptor of the active site. Residues 61 to 62 (DG), Arg66, 135 to 136 (NE), Arg146, His163, Asp165, and Ala200 contribute to the NAD(+) site.

This sequence belongs to the NAD kinase family. A divalent metal cation is required as a cofactor.

It localises to the cytoplasm. It carries out the reaction NAD(+) + ATP = ADP + NADP(+) + H(+). Involved in the regulation of the intracellular balance of NAD and NADP, and is a key enzyme in the biosynthesis of NADP. Catalyzes specifically the phosphorylation on 2'-hydroxyl of the adenosine moiety of NAD to yield NADP. In Chloroflexus aggregans (strain MD-66 / DSM 9485), this protein is NAD kinase.